We begin with the raw amino-acid sequence, 372 residues long: MVAGEASGDLLGAHFFDALKKNRPGLTAAGIAGPRMVEAGVKAIYPSEKLAVNGYVEVLRHLPELLWIRARITRHFLRERPRVFVGIDAPDFNFTLEAALKRAGVPTIHFVSPSIWAWRPERIERIKQAVSHMLVVFPFEEAIYRDAGIPVSYVGHPLADVIPLQAPTGAARATLGLGDGPIVALLPGSRLSEVDRHARLMLEAAMQVRAKEMDVRFVLPAASEAARERIARAAQGLDLPLTVLAGRSHQALAACDVAVVASGTATLEAALFKKPMVITYRVPALTARLMRKKALLPWIGLPNILARDFVVPERVQEAATPDALAADVLAWLGDAARRAALAVTFDALHRDLRQGASARIAAAIAPYLEAAR.

This sequence belongs to the LpxB family.

It catalyses the reaction a lipid X + a UDP-2-N,3-O-bis[(3R)-3-hydroxyacyl]-alpha-D-glucosamine = a lipid A disaccharide + UDP + H(+). Its pathway is bacterial outer membrane biogenesis; LPS lipid A biosynthesis. Condensation of UDP-2,3-diacylglucosamine and 2,3-diacylglucosamine-1-phosphate to form lipid A disaccharide, a precursor of lipid A, a phosphorylated glycolipid that anchors the lipopolysaccharide to the outer membrane of the cell. The chain is Lipid-A-disaccharide synthase from Thiobacillus denitrificans (strain ATCC 25259 / T1).